The chain runs to 175 residues: Large ribosomal subunit protein uL10 (175 aa).

The protein belongs to the universal ribosomal protein uL10 family. As to quaternary structure, part of the ribosomal stalk of the 50S ribosomal subunit. The N-terminus interacts with L11 and the large rRNA to form the base of the stalk. The C-terminus forms an elongated spine to which L12 dimers bind in a sequential fashion forming a multimeric L10(L12)X complex.

Functionally, forms part of the ribosomal stalk, playing a central role in the interaction of the ribosome with GTP-bound translation factors. This chain is Large ribosomal subunit protein uL10, found in Synechococcus elongatus (strain ATCC 33912 / PCC 7942 / FACHB-805) (Anacystis nidulans R2).